Here is a 173-residue protein sequence, read N- to C-terminus: Large ribosomal subunit protein uL10 (173 aa).

The protein belongs to the universal ribosomal protein uL10 family. As to quaternary structure, part of the ribosomal stalk of the 50S ribosomal subunit. The N-terminus interacts with L11 and the large rRNA to form the base of the stalk. The C-terminus forms an elongated spine to which L12 dimers bind in a sequential fashion forming a multimeric L10(L12)X complex.

Forms part of the ribosomal stalk, playing a central role in the interaction of the ribosome with GTP-bound translation factors. The chain is Large ribosomal subunit protein uL10 from Corynebacterium aurimucosum (strain ATCC 700975 / DSM 44827 / CIP 107346 / CN-1) (Corynebacterium nigricans).